The following is a 266-amino-acid chain: tRNA pseudouridine synthase A (266 aa).

Residue Asp-57 is the Nucleophile of the active site. Tyr-115 serves as a coordination point for substrate.

Belongs to the tRNA pseudouridine synthase TruA family. As to quaternary structure, homodimer.

It carries out the reaction uridine(38/39/40) in tRNA = pseudouridine(38/39/40) in tRNA. Formation of pseudouridine at positions 38, 39 and 40 in the anticodon stem and loop of transfer RNAs. This chain is tRNA pseudouridine synthase A, found in Buchnera aphidicola subsp. Acyrthosiphon pisum (strain Tuc7).